The chain runs to 197 residues: Peptide deformylase (197 aa).

The Fe cation site is built by cysteine 106 and histidine 148. Glutamate 149 is a catalytic residue. Histidine 152 is a Fe cation binding site.

This sequence belongs to the polypeptide deformylase family. Fe(2+) is required as a cofactor.

It carries out the reaction N-terminal N-formyl-L-methionyl-[peptide] + H2O = N-terminal L-methionyl-[peptide] + formate. In terms of biological role, removes the formyl group from the N-terminal Met of newly synthesized proteins. Requires at least a dipeptide for an efficient rate of reaction. N-terminal L-methionine is a prerequisite for activity but the enzyme has broad specificity at other positions. The sequence is that of Peptide deformylase from Mycolicibacterium smegmatis (strain ATCC 700084 / mc(2)155) (Mycobacterium smegmatis).